The primary structure comprises 69 residues: Putative membrane protein insertion efficiency factor (69 aa).

The protein belongs to the UPF0161 family.

It localises to the cell inner membrane. Functionally, could be involved in insertion of integral membrane proteins into the membrane. The sequence is that of Putative membrane protein insertion efficiency factor from Aromatoleum aromaticum (strain DSM 19018 / LMG 30748 / EbN1) (Azoarcus sp. (strain EbN1)).